The following is a 380-amino-acid chain: uncharacterized protein (380 aa).

Residues 1–18 form the signal peptide; it reads MALRHLALLAGLLVGVAS. Asn-104, Asn-111, and Asn-128 each carry an N-linked (GlcNAc...) asparagine glycan. A helical membrane pass occupies residues 148–168; it reads LFLGTFFISSGLILSVAGFFY. 2 disordered regions span residues 229 to 256 and 336 to 380; these read PQTG…QGQG and RFSG…ISNV. Over residues 240 to 249 the composition is skewed to pro residues; sequence PPLPGSPGDP. The span at 356-366 shows a compositional bias: basic and acidic residues; that stretch reads VRRERPLDRAT.

It is found in the membrane. This is an uncharacterized protein from Homo sapiens (Human).